A 204-amino-acid chain; its full sequence is Holliday junction branch migration complex subunit RuvA (204 aa).

Residues 1–64 form a domain I region; the sequence is MFAFLRGELV…EDLQQLFGFL (64 aa). Residues 65–143 form a domain II region; that stretch reads DEEELQLFRL…KIQPTSSAKA (79 aa). The segment at 144–151 is flexible linker; sequence GAPSAVLS. The segment at 151 to 204 is domain III; it reads SATQLIDDAVAALTTLGFPKASAQKAVSKVLETTPGLSVEELVRTSLAAMHNNL.

This sequence belongs to the RuvA family. Homotetramer. Forms an RuvA(8)-RuvB(12)-Holliday junction (HJ) complex. HJ DNA is sandwiched between 2 RuvA tetramers; dsDNA enters through RuvA and exits via RuvB. An RuvB hexamer assembles on each DNA strand where it exits the tetramer. Each RuvB hexamer is contacted by two RuvA subunits (via domain III) on 2 adjacent RuvB subunits; this complex drives branch migration. In the full resolvosome a probable DNA-RuvA(4)-RuvB(12)-RuvC(2) complex forms which resolves the HJ.

It is found in the cytoplasm. Its function is as follows. The RuvA-RuvB-RuvC complex processes Holliday junction (HJ) DNA during genetic recombination and DNA repair, while the RuvA-RuvB complex plays an important role in the rescue of blocked DNA replication forks via replication fork reversal (RFR). RuvA specifically binds to HJ cruciform DNA, conferring on it an open structure. The RuvB hexamer acts as an ATP-dependent pump, pulling dsDNA into and through the RuvAB complex. HJ branch migration allows RuvC to scan DNA until it finds its consensus sequence, where it cleaves and resolves the cruciform DNA. The polypeptide is Holliday junction branch migration complex subunit RuvA (Chlorobaculum parvum (strain DSM 263 / NCIMB 8327) (Chlorobium vibrioforme subsp. thiosulfatophilum)).